Here is a 131-residue protein sequence, read N- to C-terminus: Acidic leucine-rich nuclear phosphoprotein 32 family member D (131 aa).

5 LRR repeats span residues 18-38 (DVKE…EGLT), 43-64 (ELEL…PKLN), 65-87 (KLKK…AEKC), 89-110 (NLIH…EPLK), and 114-131 (NLES…LNNY).

Belongs to the ANP32 family.

The protein is Acidic leucine-rich nuclear phosphoprotein 32 family member D (ANP32D) of Homo sapiens (Human).